We begin with the raw amino-acid sequence, 509 residues long: tRNA-2-methylthio-N(6)-dimethylallyladenosine synthase (509 aa).

The span at M1–N13 shows a compositional bias: polar residues. Residues M1–Y26 form a disordered region. Residues K16–K25 show a composition bias toward basic and acidic residues. An MTTase N-terminal domain is found at R66–F184. 6 residues coordinate [4Fe-4S] cluster: C75, C111, C145, C221, C225, and C228. One can recognise a Radical SAM core domain in the interval R207–E437. One can recognise a TRAM domain in the interval N440–E503.

It belongs to the methylthiotransferase family. MiaB subfamily. Monomer. [4Fe-4S] cluster serves as cofactor.

The protein localises to the cytoplasm. The catalysed reaction is N(6)-dimethylallyladenosine(37) in tRNA + (sulfur carrier)-SH + AH2 + 2 S-adenosyl-L-methionine = 2-methylsulfanyl-N(6)-dimethylallyladenosine(37) in tRNA + (sulfur carrier)-H + 5'-deoxyadenosine + L-methionine + A + S-adenosyl-L-homocysteine + 2 H(+). In terms of biological role, catalyzes the methylthiolation of N6-(dimethylallyl)adenosine (i(6)A), leading to the formation of 2-methylthio-N6-(dimethylallyl)adenosine (ms(2)i(6)A) at position 37 in tRNAs that read codons beginning with uridine. In Bacillus cereus (strain ATCC 10987 / NRS 248), this protein is tRNA-2-methylthio-N(6)-dimethylallyladenosine synthase.